The sequence spans 209 residues: Uracil phosphoribosyltransferase (209 aa).

Residues Arg79, Arg104, and Asp131–Ser139 contribute to the 5-phospho-alpha-D-ribose 1-diphosphate site. Residues Ile194 and Gly199–Ala201 contribute to the uracil site. Asp200 contributes to the 5-phospho-alpha-D-ribose 1-diphosphate binding site.

The protein belongs to the UPRTase family. Mg(2+) serves as cofactor.

The enzyme catalyses UMP + diphosphate = 5-phospho-alpha-D-ribose 1-diphosphate + uracil. It functions in the pathway pyrimidine metabolism; UMP biosynthesis via salvage pathway; UMP from uracil: step 1/1. With respect to regulation, allosterically activated by GTP. Its function is as follows. Catalyzes the conversion of uracil and 5-phospho-alpha-D-ribose 1-diphosphate (PRPP) to UMP and diphosphate. The chain is Uracil phosphoribosyltransferase from Lactobacillus gasseri (strain ATCC 33323 / DSM 20243 / BCRC 14619 / CIP 102991 / JCM 1131 / KCTC 3163 / NCIMB 11718 / NCTC 13722 / AM63).